The primary structure comprises 157 residues: 2-C-methyl-D-erythritol 2,4-cyclodiphosphate synthase (157 aa).

Residues Asp8 and His10 each coordinate a divalent metal cation. Residues 8–10 (DVH) and 34–35 (HS) each bind 4-CDP-2-C-methyl-D-erythritol 2-phosphate. A divalent metal cation is bound at residue His42. Residues 56-58 (DIG), 61-65 (FPDTD), 100-106 (AQAPKMA), 132-135 (TTTE), Phe139, and Arg142 each bind 4-CDP-2-C-methyl-D-erythritol 2-phosphate.

This sequence belongs to the IspF family. Homotrimer. A divalent metal cation serves as cofactor.

It carries out the reaction 4-CDP-2-C-methyl-D-erythritol 2-phosphate = 2-C-methyl-D-erythritol 2,4-cyclic diphosphate + CMP. Its pathway is isoprenoid biosynthesis; isopentenyl diphosphate biosynthesis via DXP pathway; isopentenyl diphosphate from 1-deoxy-D-xylulose 5-phosphate: step 4/6. Involved in the biosynthesis of isopentenyl diphosphate (IPP) and dimethylallyl diphosphate (DMAPP), two major building blocks of isoprenoid compounds. Catalyzes the conversion of 4-diphosphocytidyl-2-C-methyl-D-erythritol 2-phosphate (CDP-ME2P) to 2-C-methyl-D-erythritol 2,4-cyclodiphosphate (ME-CPP) with a corresponding release of cytidine 5-monophosphate (CMP). This Serratia proteamaculans (strain 568) protein is 2-C-methyl-D-erythritol 2,4-cyclodiphosphate synthase.